We begin with the raw amino-acid sequence, 236 residues long: Phosphoribosylaminoimidazole-succinocarboxamide synthase (236 aa).

The protein belongs to the SAICAR synthetase family.

The enzyme catalyses 5-amino-1-(5-phospho-D-ribosyl)imidazole-4-carboxylate + L-aspartate + ATP = (2S)-2-[5-amino-1-(5-phospho-beta-D-ribosyl)imidazole-4-carboxamido]succinate + ADP + phosphate + 2 H(+). The protein operates within purine metabolism; IMP biosynthesis via de novo pathway; 5-amino-1-(5-phospho-D-ribosyl)imidazole-4-carboxamide from 5-amino-1-(5-phospho-D-ribosyl)imidazole-4-carboxylate: step 1/2. In Chlorobium phaeobacteroides (strain BS1), this protein is Phosphoribosylaminoimidazole-succinocarboxamide synthase.